Consider the following 324-residue polypeptide: D-alanine--D-alanine ligase (324 aa).

Residues 121–321 form the ATP-grasp domain; the sequence is NQYLKAFGVR…IKDVMTDIIE (201 aa). Position 149 to 204 (149 to 204) interacts with ATP; that stretch reads VEKIGLPCFIKPNLGGSSFGVTKVKTREQIQPAIAKAFSEAEEVMIEAFMGGTELT. Mg(2+) is bound by residues D275, E288, and N290.

The protein belongs to the D-alanine--D-alanine ligase family. Mg(2+) is required as a cofactor. The cofactor is Mn(2+).

The protein localises to the cytoplasm. The catalysed reaction is 2 D-alanine + ATP = D-alanyl-D-alanine + ADP + phosphate + H(+). It functions in the pathway cell wall biogenesis; peptidoglycan biosynthesis. In terms of biological role, cell wall formation. The protein is D-alanine--D-alanine ligase of Bacteroides fragilis (strain YCH46).